The following is a 92-amino-acid chain: Small ribosomal subunit protein uS19 (92 aa).

Protein S19 forms a complex with S13 that binds strongly to the 16S ribosomal RNA. This chain is Small ribosomal subunit protein uS19, found in Rhodopseudomonas palustris (strain ATCC BAA-98 / CGA009).